The primary structure comprises 349 residues: Hepatic sodium/bile acid cotransporter (349 aa).

Topologically, residues 1 to 22 (MEAHNASAPFNFTLPPNFGKRP) are extracellular. 2 N-linked (GlcNAc...) asparagine glycosylation sites follow: Asn5 and Asn11. Residues 23-44 (TDLALSVILVFMLFFIMLSLGC) traverse the membrane as a helical segment. Residues 45–47 (TME) lie on the Cytoplasmic side of the membrane. A helical membrane pass occupies residues 48–83 (FSKIKAHLWKPKGLAIALVAQYGIMPLTAFVLGKVF). The Extracellular segment spans residues 84–86 (RLK). A discontinuously helical transmembrane segment spans residues 87-112 (NIEALAILVCGCSPGGNLSNVFSLAM). Residues 113 to 115 (KGD) lie on the Cytoplasmic side of the membrane. A helical membrane pass occupies residues 116–142 (MNLSIVMTTCSTFCALGMMPLLLYIYS). Topologically, residues 143-156 (RGIYDGDLKDKVPY) are extracellular. A helical transmembrane segment spans residues 157-179 (KGIVISLVLVLIPCTIGIVLKSK). Over 180–183 (RPQY) the chain is Cytoplasmic. The helical transmembrane segment at 184–217 (MRYVIKGGMIIILLCSVAVTVLSAINVGKSIMFA) threads the bilayer. The Extracellular segment spans residues 218–219 (MT). Residues 220–243 (PLLIATSSLMPFIGFLLGYVLSAL) form a helical membrane-spanning segment. Residues 244–247 (FCLN) lie on the Cytoplasmic side of the membrane. The chain crosses the membrane as a discontinuously helical span at residues 248–273 (GRCRRTVSMETGCQNVQLCSTILNVA). Topologically, residues 274–280 (FPPEVIG) are extracellular. The helical transmembrane segment at 281-311 (PLFFFPLLYMIFQLGEGLLLIAIFWCYEKFK) threads the bilayer. Over 312 to 349 (TPKDKTKMIYTAATTEETIPGALGNGTYKGEDCSPCTA) the chain is Cytoplasmic.

The protein belongs to the bile acid:sodium symporter (BASS) (TC 2.A.28) family. In terms of assembly, (Microbial infection) Interacts with the myristoylated pre-S1 domain of hepatitis B virus large envelope protein; myristoylation is essential for this interaction. Expressed in liver. Expressed in placental trophoblasts.

Its subcellular location is the cell membrane. The enzyme catalyses taurocholate(out) + 2 Na(+)(out) = taurocholate(in) + 2 Na(+)(in). It carries out the reaction cholate(out) + 2 Na(+)(out) = cholate(in) + 2 Na(+)(in). The catalysed reaction is estrone 3-sulfate(out) + 2 Na(+)(out) = estrone 3-sulfate(in) + 2 Na(+)(in). It catalyses the reaction taurochenodeoxycholate(out) + 2 Na(+)(out) = taurochenodeoxycholate(in) + 2 Na(+)(in). The enzyme catalyses tauroursodeoxycholate(out) + 2 Na(+)(out) = tauroursodeoxycholate(in) + 2 Na(+)(in). It carries out the reaction glycocholate(out) + 2 Na(+)(out) = glycocholate(in) + 2 Na(+)(in). The catalysed reaction is tauronorcholate(out) + 2 Na(+)(out) = tauronorcholate(in) + 2 Na(+)(in). It catalyses the reaction taurodeoxycholate(out) + 2 Na(+)(out) = taurodeoxycholate(in) + 2 Na(+)(in). The enzyme catalyses tauroallocholate(out) + 2 Na(+)(out) = tauroallocholate(in) + 2 Na(+)(in). It carries out the reaction taurohyodeoxycholate(out) + 2 Na(+)(out) = taurohyodeoxycholate(in) + 2 Na(+)(in). The catalysed reaction is taurohyocholate(out) + 2 Na(+)(out) = taurohyocholate(in) + 2 Na(+)(in). It catalyses the reaction tauro-beta-muricholate(out) + 2 Na(+)(out) = tauro-beta-muricholate(in) + 2 Na(+)(in). The transport of bile acids is sodium-dependent. Functionally, as a major transporter of conjugated bile salts from plasma into the hepatocyte, it plays a key role in the enterohepatic circulation of bile salts necessary for the solubilization and absorption of dietary fat and fat-soluble vitamins. It is strictly dependent on the extracellular presence of sodium. It exhibits broad substrate specificity and transports various bile acids, such as taurocholate, cholate, as well as non-bile acid organic compounds, such as estrone sulfate. Works collaboratively with the ileal transporter (NTCP2), the organic solute transporter (OST), and the bile salt export pump (BSEP), to ensure efficacious biological recycling of bile acids during enterohepatic circulation. Its function is as follows. (Microbial infection) Acts as an entry receptor for hepatitis B virus (HBV). The recognition for human SLC10A1/NTCP is highly specific. This is Hepatic sodium/bile acid cotransporter (SLC10A1) from Homo sapiens (Human).